Consider the following 212-residue polypeptide: ATP-dependent dethiobiotin synthetase BioD (212 aa).

G13–V18 contributes to the ATP binding site. Mg(2+) is bound at residue T17. K33 is an active-site residue. Position 37 (S37) interacts with substrate. E100 contacts Mg(2+). ATP-binding positions include E100 to G103 and P184 to L186.

Belongs to the dethiobiotin synthetase family. As to quaternary structure, homodimer. The cofactor is Mg(2+).

The protein resides in the cytoplasm. It catalyses the reaction (7R,8S)-7,8-diammoniononanoate + CO2 + ATP = (4R,5S)-dethiobiotin + ADP + phosphate + 3 H(+). It participates in cofactor biosynthesis; biotin biosynthesis; biotin from 7,8-diaminononanoate: step 1/2. Catalyzes a mechanistically unusual reaction, the ATP-dependent insertion of CO2 between the N7 and N8 nitrogen atoms of 7,8-diaminopelargonic acid (DAPA, also called 7,8-diammoniononanoate) to form a ureido ring. The protein is ATP-dependent dethiobiotin synthetase BioD of Rhodopseudomonas palustris (strain TIE-1).